Consider the following 66-residue polypeptide: Large ribosomal subunit protein uL29 (66 aa).

This sequence belongs to the universal ribosomal protein uL29 family.

The protein is Large ribosomal subunit protein uL29 of Pseudothermotoga lettingae (strain ATCC BAA-301 / DSM 14385 / NBRC 107922 / TMO) (Thermotoga lettingae).